The primary structure comprises 548 residues: MHKGKKNYPNLITSFRMNLKKIILNHDRFSHPERWKTNALLRFTFVYIKFLFDLMIIKNPLRMVGKTYRDAVTALNSLQSNYANIMAIRQTGDRKNTMTLLEMHEWSRRIGYSASDFNKLNIVHITGTKGKGSTAAFTSSILGQYKEQLPRIGLYTSPHLKSVRERIRINGEPISEEKFAKYFFEVWDRLDSTTSSLDKFPHMIPGSKPGYFKFLTLLSFHTFIQEDCKSCVYEVGVGGELDSTNIIEKPIVCGVTLLGIDHTFMLGDTIEEIAWNKGGIFKSGAPAFTVEKQPPQGLTILKERAEERKTTLTEVPPFKQLENVKLGIAGEFQKSNASLAVMLASEILHTSNILEEKIKCSSNASIPEKFIIGLQNTKWEGRCQVLEKGKNVWYIDGAHTKDSMVAASTWFRDTVRLSKRKKILLFNQQSRDANALVNNLYSSVSPEITFDDVIFTTNVTWKSGSYSADLVSMNTSQEDVEKLKVQESLVKNWNKIDDNRAKTHVTASIEEANELIETLYDEPADIFVTGSLHLVGGLLVVFDRIDVK.

130-133 (GKGS) lines the ATP pocket. Ser157, Glu234, and His262 together coordinate Mg(2+). Arg382 and Asp396 together coordinate ATP.

Belongs to the folylpolyglutamate synthase family. A monovalent cation is required as a cofactor.

The protein resides in the mitochondrion inner membrane. It is found in the mitochondrion matrix. Its subcellular location is the cytoplasm. It catalyses the reaction (6S)-5,6,7,8-tetrahydrofolyl-(gamma-L-Glu)(n) + L-glutamate + ATP = (6S)-5,6,7,8-tetrahydrofolyl-(gamma-L-Glu)(n+1) + ADP + phosphate + H(+). It participates in cofactor biosynthesis; tetrahydrofolylpolyglutamate biosynthesis. Its function is as follows. Catalyzes conversion of folates to polyglutamate derivatives allowing concentration of folate compounds in the cell and the intracellular retention of these cofactors, which are important substrates for most of the folate-dependent enzymes that are involved in one-carbon transfer reactions involved in purine, pyrimidine and amino acid synthesis. Required for methionine synthesis and maintenance of intact mitochondrial DNA. Involved in telomere maintenance. This chain is Folylpolyglutamate synthase, found in Saccharomyces cerevisiae (strain AWRI796) (Baker's yeast).